The primary structure comprises 134 residues: Small ribosomal subunit protein uS11 (134 aa).

Belongs to the universal ribosomal protein uS11 family. In terms of assembly, part of the 30S ribosomal subunit. Interacts with proteins S7 and S18. Binds to IF-3.

Its function is as follows. Located on the platform of the 30S subunit, it bridges several disparate RNA helices of the 16S rRNA. Forms part of the Shine-Dalgarno cleft in the 70S ribosome. The polypeptide is Small ribosomal subunit protein uS11 (Paracidovorax citrulli (strain AAC00-1) (Acidovorax citrulli)).